The primary structure comprises 392 residues: Protein O-glucosyltransferase 1 (392 aa).

The signal sequence occupies residues 1 to 23; that stretch reads MEWWASSPLRLWLLLFLLPSAQG. Residues Asn40 and Asn53 are each glycosylated (N-linked (GlcNAc...) asparagine). 4 disulfide bridges follow: Cys49/Cys56, Cys54/Cys357, Cys102/Cys108, and Cys263/Cys286. Residues 103-107 form an interaction with the consensus sequence C-X-S-X-[PA]-C in peptide substrates region; that stretch reads MFPSR. Asp133 acts as the Proton donor/acceptor in catalysis. An interaction with the consensus sequence C-X-S-X-[PA]-C in peptide substrates region spans residues 172-178; it reads AVWPIYP. Tyr177 provides a ligand contact to UDP-alpha-D-glucose. Asn204 carries N-linked (GlcNAc...) asparagine glycosylation. UDP-alpha-D-glucose-binding positions include Ser212, Arg218, and 274 to 279; that span reads VAASFR. N-linked (GlcNAc...) asparagine glycosylation is present at Asn373. The short motif at 389-392 is the Prevents secretion from ER element; the sequence is KTEL.

It belongs to the glycosyltransferase 90 family. In terms of tissue distribution, expressed in most adult tissues at different intensities. Abundantly expressed in liver. Expressed also in brain, heart, skeletal muscle, spleen, kidney, placenta, lung and peripheral blood leukocyte. Not detectable in colon, thymus and small intestine. Expressed in the epidermis, especially in the upper parts, stratum spinosum and stratum granulosum (at protein level).

The protein resides in the endoplasmic reticulum lumen. It catalyses the reaction L-seryl-[EGF-like domain protein] + UDP-alpha-D-xylose = 3-O-(beta-D-xylosyl)-L-seryl-[EGF-like domain protein] + UDP + H(+). The catalysed reaction is L-seryl-[EGF-like domain protein] + UDP-alpha-D-glucose = 3-O-(beta-D-glucosyl)-L-seryl-[EGF-like domain protein] + UDP + H(+). It functions in the pathway protein modification; protein glycosylation. In terms of biological role, dual specificity glycosyltransferase that catalyzes the transfer of glucose and xylose from UDP-glucose and UDP-xylose, respectively, to a serine residue found in the consensus sequence of C-X-S-X-P-C. Specifically targets extracellular EGF repeats of protein such as CRB2, F7, F9 and NOTCH2. Acts as a positive regulator of Notch signaling by mediating O-glucosylation of Notch, leading to regulate muscle development. Notch glucosylation does not affect Notch ligand binding. Required during early development to promote gastrulation: acts by mediating O-glucosylation of CRB2, which is required for CRB2 localization to the cell membrane. This chain is Protein O-glucosyltransferase 1, found in Homo sapiens (Human).